A 251-amino-acid polypeptide reads, in one-letter code: Ubiquinone/menaquinone biosynthesis C-methyltransferase UbiE (251 aa).

S-adenosyl-L-methionine-binding positions include threonine 74, aspartate 95, 123–124, and serine 140; that span reads NA.

It belongs to the class I-like SAM-binding methyltransferase superfamily. MenG/UbiE family.

The catalysed reaction is a 2-demethylmenaquinol + S-adenosyl-L-methionine = a menaquinol + S-adenosyl-L-homocysteine + H(+). It carries out the reaction a 2-methoxy-6-(all-trans-polyprenyl)benzene-1,4-diol + S-adenosyl-L-methionine = a 5-methoxy-2-methyl-3-(all-trans-polyprenyl)benzene-1,4-diol + S-adenosyl-L-homocysteine + H(+). The protein operates within quinol/quinone metabolism; menaquinone biosynthesis; menaquinol from 1,4-dihydroxy-2-naphthoate: step 2/2. It functions in the pathway cofactor biosynthesis; ubiquinone biosynthesis. Its function is as follows. Methyltransferase required for the conversion of demethylmenaquinol (DMKH2) to menaquinol (MKH2) and the conversion of 2-polyprenyl-6-methoxy-1,4-benzoquinol (DDMQH2) to 2-polyprenyl-3-methyl-6-methoxy-1,4-benzoquinol (DMQH2). The polypeptide is Ubiquinone/menaquinone biosynthesis C-methyltransferase UbiE (Yersinia enterocolitica serotype O:8 / biotype 1B (strain NCTC 13174 / 8081)).